The following is a 402-amino-acid chain: Transcription regulatory protein OpdE (402 aa).

12 consecutive transmembrane segments (helical) span residues 22 to 42, 60 to 80, 86 to 106, 108 to 128, 147 to 167, 170 to 190, 220 to 240, 256 to 276, 296 to 316, 318 to 338, 348 to 368, and 375 to 395; these read VLAI…PVSL, GIAI…SVAG, TLLL…ALAP, YFVY…FWSM, ALVN…GAWL, LIGW…ALAW, PGVM…FSLF, AHVS…TLLI, ALIA…VVLL, LWGL…ARVF, LFVA…GLLF, and ATFF…ILTA.

To B.subtilis YwfA.

The protein localises to the cell membrane. Regulates the expression of oprD which encodes the imipenem-specific porin. This Pseudomonas aeruginosa (strain ATCC 15692 / DSM 22644 / CIP 104116 / JCM 14847 / LMG 12228 / 1C / PRS 101 / PAO1) protein is Transcription regulatory protein OpdE (opdE).